The following is a 66-amino-acid chain: Large ribosomal subunit protein uL29 (66 aa).

Belongs to the universal ribosomal protein uL29 family.

This is Large ribosomal subunit protein uL29 from Roseiflexus castenholzii (strain DSM 13941 / HLO8).